A 194-amino-acid chain; its full sequence is Peptidyl-tRNA hydrolase (194 aa).

Tyrosine 17 serves as a coordination point for tRNA. Histidine 22 functions as the Proton acceptor in the catalytic mechanism. Tyrosine 68, asparagine 70, and asparagine 116 together coordinate tRNA.

This sequence belongs to the PTH family. In terms of assembly, monomer.

It is found in the cytoplasm. It carries out the reaction an N-acyl-L-alpha-aminoacyl-tRNA + H2O = an N-acyl-L-amino acid + a tRNA + H(+). Functionally, hydrolyzes ribosome-free peptidyl-tRNAs (with 1 or more amino acids incorporated), which drop off the ribosome during protein synthesis, or as a result of ribosome stalling. Its function is as follows. Catalyzes the release of premature peptidyl moieties from peptidyl-tRNA molecules trapped in stalled 50S ribosomal subunits, and thus maintains levels of free tRNAs and 50S ribosomes. This Azotobacter vinelandii (strain DJ / ATCC BAA-1303) protein is Peptidyl-tRNA hydrolase.